Here is a 173-residue protein sequence, read N- to C-terminus: Large ribosomal subunit protein uL16 (173 aa).

The protein belongs to the universal ribosomal protein uL16 family.

The sequence is that of Large ribosomal subunit protein uL16 from Methanococcus maripaludis (strain C5 / ATCC BAA-1333).